The following is a 142-amino-acid chain: MAKKVAGQLKLQVKAGSANPSPPIGPALGQRGINIMEFCKAFNAATQEMEKGMPIPVVITYFQDKSFTFVMKQPPVSYFLKREAKVQSGSKTPGKAKAGAISKAQIRTIAEAKMKDLNAADIEGAMAMVEGSARSMGLEVTG.

It belongs to the universal ribosomal protein uL11 family. Part of the ribosomal stalk of the 50S ribosomal subunit. Interacts with L10 and the large rRNA to form the base of the stalk. L10 forms an elongated spine to which L12 dimers bind in a sequential fashion forming a multimeric L10(L12)X complex. Post-translationally, one or more lysine residues are methylated.

Functionally, forms part of the ribosomal stalk which helps the ribosome interact with GTP-bound translation factors. The protein is Large ribosomal subunit protein uL11 of Sinorhizobium medicae (strain WSM419) (Ensifer medicae).